The chain runs to 231 residues: ABC transporter ATP-binding protein YtrE (231 aa).

Positions 4 to 231 constitute an ABC transporter domain; it reads VQHIDHSFTI…VLKGGITVEV (228 aa). 42 to 49 is a binding site for ATP; the sequence is GRSGSGKS.

This sequence belongs to the ABC transporter superfamily. The complex is composed of 2 ATP-binding proteins (YtrB and YtrE), 2 transmembrane proteins (YtrC and YtrD) and a solute-binding protein (YtrF).

It localises to the cell membrane. Part of the ABC transporter complex YtrBCDEF that plays a role in acetoin utilization during stationary phase and sporulation. This chain is ABC transporter ATP-binding protein YtrE (ytrE), found in Bacillus subtilis (strain 168).